Consider the following 611-residue polypeptide: Fatty acid photodecarboxylase, chloroplastic (611 aa).

Residues 1 to 22 form a disordered region; that stretch reads MMLGPKTVTRGATKGAAPRSMA. The N-terminal 36 residues, 1–36, are a transit peptide targeting the chloroplast; it reads MMLGPKTVTRGATKGAAPRSMAARRVGGARRLSVRA. FAD is bound by residues 55–56, Glu-76, Met-125, Ser-129, and 133–136; these read TA and NATL. Hexadecanoate-binding residues include Cys-392, Arg-412, Tyr-427, and Gln-447. Gly-582 lines the FAD pocket.

The protein belongs to the GMC oxidoreductase family. The cofactor is FAD.

It localises to the plastid. The protein localises to the chloroplast. The enzyme catalyses a long-chain fatty acid + hnu + H(+) = a long-chain alkane + CO2. It carries out the reaction hnu + hexadecanoate + H(+) = pentadecane + CO2. Activated by blue light and repressed by red light. In terms of biological role, catalyzes the decarboxylation of free fatty acids to n-alkanes or n-alkenes in response to blue light. Substrate preference is toward fatty acids with C17 or C18 chains. Saturated fatty acids are converted to alkanes, not alkenes. The decarboxylation is initiated through electron abstraction from the fatty acid by the photo-excited FAD. This is Fatty acid photodecarboxylase, chloroplastic from Chlamydomonas reinhardtii (Chlamydomonas smithii).